Reading from the N-terminus, the 484-residue chain is Probable cytochrome P450 555A1 (484 aa).

Residues 1–21 (MIIIVIVVFLFYFSFLNLNLN) traverse the membrane as a helical segment. Cys-432 contacts heme.

This sequence belongs to the cytochrome P450 family. It depends on heme as a cofactor.

It localises to the membrane. This Dictyostelium discoideum (Social amoeba) protein is Probable cytochrome P450 555A1 (cyp555A1).